Consider the following 425-residue polypeptide: Orexin/Hypocretin receptor type 1 (425 aa).

The interval 1 to 24 is disordered; it reads MEPSATPGAQMGVPPGSREPSPVP. At 1–46 the chain is on the extracellular side; it reads MEPSATPGAQMGVPPGSREPSPVPPDYEDEFLRYLWRDYLYPKQYE. The tract at residues 26 to 41 is required for response to orexin-A; it reads DYEDEFLRYLWRDYLY. A helical membrane pass occupies residues 47 to 67; sequence WVLIAAYVAVFVVALVGNTLV. Residues 68–82 lie on the Cytoplasmic side of the membrane; it reads CLAVWRNHHMRTVTN. Residues 83–105 traverse the membrane as a helical segment; sequence YFIVNLSLADVLVTAICLPASLL. The Extracellular segment spans residues 106 to 119; sequence VDITESWLFGHALC. A disulfide bond links C119 and C202. A helical membrane pass occupies residues 120–140; that stretch reads KVIPYLQAVSVSVAVLTLSFI. Residues 141 to 160 lie on the Cytoplasmic side of the membrane; it reads ALDRWYAICHPLLFKSTARR. Residues 161-182 traverse the membrane as a helical segment; the sequence is ARGSILGIWAVSLAIMVPQAAV. Residues 183-213 are Extracellular-facing; the sequence is MECSSVLPELANRTRLFSVCDERWADDLYPK. N-linked (GlcNAc...) asparagine glycosylation occurs at N194. A helical transmembrane segment spans residues 214–235; sequence IYHSCFFIVTYLAPLGLMAMAY. At 236–298 the chain is on the cytoplasmic side; that stretch reads FQIFRKLWGR…QMRARRKTAK (63 aa). Residues 299 to 321 form a helical membrane-spanning segment; it reads MLMVVLLVFALCYLPISVLNVLK. N318 lines the suvorexant pocket. Over 322–336 the chain is Extracellular; the sequence is RVFGMFRQASDREAV. The chain crosses the membrane as a helical span at residues 337–360; the sequence is YACFTFSHWLVYANSAANPIIYNF. Topologically, residues 361–425 are cytoplasmic; it reads LSGKFREQFK…VLTSVTTVLP (65 aa).

Belongs to the G-protein coupled receptor 1 family.

It is found in the cell membrane. Moderately selective excitatory receptor for orexin-A and, with a lower affinity, for orexin-B neuropeptide. Triggers an increase in cytoplasmic Ca(2+) levels in response to orexin-A binding. The polypeptide is Orexin/Hypocretin receptor type 1 (Homo sapiens (Human)).